A 158-amino-acid chain; its full sequence is NAD(P)H-quinone oxidoreductase subunit O, chloroplastic (158 aa).

The transit peptide at 1-38 directs the protein to the chloroplast; that stretch reads MAFSATVSQLSSLSTISSSLPISSRRLPHRSLPQFTVK. A disordered region spans residues 33–70; it reads PQFTVKAEAEKEKQSTQGKSDGEASPAATKTPKTLPKK. Residues 56–70 show a composition bias toward low complexity; sequence ASPAATKTPKTLPKK.

The protein belongs to the NDH complex subunit O family. Part of the chloroplast NDH complex, composed of a mixture of chloroplast and nucleus encoded subunits. Component of the NDH subcomplex A, at least composed of ndhH, ndhI, ndhJ, ndhK, ndhL, ndhM, ndhN and ndhO.

The protein resides in the plastid. The protein localises to the chloroplast thylakoid membrane. It catalyses the reaction a plastoquinone + NADH + (n+1) H(+)(in) = a plastoquinol + NAD(+) + n H(+)(out). The enzyme catalyses a plastoquinone + NADPH + (n+1) H(+)(in) = a plastoquinol + NADP(+) + n H(+)(out). Its function is as follows. NDH shuttles electrons from NAD(P)H:plastoquinone, via FMN and iron-sulfur (Fe-S) centers, to quinones in the photosynthetic chain and possibly in a chloroplast respiratory chain. The immediate electron acceptor for the enzyme in this species is believed to be plastoquinone. Couples the redox reaction to proton translocation, and thus conserves the redox energy in a proton gradient. This Arabidopsis thaliana (Mouse-ear cress) protein is NAD(P)H-quinone oxidoreductase subunit O, chloroplastic.